The primary structure comprises 599 residues: Microtubule-associated protein 70-2 (599 aa).

The disordered stretch occupies residues 1 to 30 (MADGGGGEEGSASALRGSARRRGAVQPAGL). A coiled-coil region spans residues 43 to 349 (DPVKVELNRL…ARSEAQLKEK (307 aa)). The segment at 227 to 460 (ILDRLHRQKV…HLLNRSTDAV (234 aa)) is required for targeting to microtubules. 2 disordered regions span residues 357–453 (LEDG…PHLL) and 557–599 (AMRL…RNLQ). Low complexity predominate over residues 404 to 420 (RRSPSFNSRSSLSTSSS). Residues 533-570 (LTKAMEVEAKKMRREVAAMEKEVAAMRLDKDQENKAKR) adopt a coiled-coil conformation. Residues 557-568 (AMRLDKDQENKA) show a composition bias toward basic and acidic residues.

This sequence belongs to the MAP70 family.

It is found in the cytoplasm. The protein localises to the cytoskeleton. Its function is as follows. Plant-specific protein that interact with microtubules. This chain is Microtubule-associated protein 70-2 (MAP70.2), found in Oryza sativa subsp. japonica (Rice).